A 230-amino-acid polypeptide reads, in one-letter code: uncharacterized protein (230 aa).

The segment at 1–57 is disordered; it reads MPGPHSPNPGVGTNGPAPYPEPSSHEPQALDYPHDLGAAEPAFAPGPADDAALPPAA. The segment covering 38–55 has biased composition (low complexity); the sequence is AAEPAFAPGPADDAALPP. Residues 75–95 traverse the membrane as a helical segment; it reads LLIGIVVALALVSAMTAAIIY.

It is found in the membrane. This is an uncharacterized protein from Mycobacterium tuberculosis (strain CDC 1551 / Oshkosh).